A 292-amino-acid polypeptide reads, in one-letter code: Xanthine dehydrogenase FAD-binding subunit (292 aa).

One can recognise an FAD-binding PCMH-type domain in the interval Met-1 to Lys-176. FAD-binding positions include Lys-27–Asp-34, Ala-109–Gly-113, Ile-165, and Phe-184.

Heterotrimer of XdhA, XdhB and XdhC. Requires FAD as cofactor.

The enzyme catalyses xanthine + NAD(+) + H2O = urate + NADH + H(+). It catalyses the reaction hypoxanthine + NAD(+) + H2O = xanthine + NADH + H(+). It participates in purine metabolism; hypoxanthine degradation; urate from hypoxanthine: step 1/2. Its pathway is purine metabolism; hypoxanthine degradation; urate from hypoxanthine: step 2/2. In terms of biological role, presumed to be a dehydrogenase, but possibly an oxidase. Participates in limited purine salvage (requires aspartate) but does not support aerobic growth on purines as the sole carbon source (purine catabolism). The chain is Xanthine dehydrogenase FAD-binding subunit (xdhB) from Escherichia coli O157:H7.